A 408-amino-acid polypeptide reads, in one-letter code: Collagen and calcium-binding EGF domain-containing protein 1 (408 aa).

The first 35 residues, 1-35 (MVPPPLPSRGGAAKRQLGKSLGPLLLLLALGHTWT), serve as a signal peptide directing secretion. The EGF-like; calcium-binding domain maps to 135–176 (DIDECATSNTTLCAHICINTMGSYHCECREGYILEDDGRTCT). 3 disulfides stabilise this stretch: Cys-139/Cys-151, Cys-147/Cys-160, and Cys-162/Cys-175. N-linked (GlcNAc...) asparagine glycosylation occurs at Asn-143. The N-linked (GlcNAc...) asparagine glycan is linked to Asn-183. 2 disordered regions span residues 246–335 (YLPG…GPPG) and 361–408 (HRTH…NFYP). 2 Collagen-like domains span residues 247–292 (LPGP…PMGP) and 302–335 (GRRGPVGPPGAPGRHGSKGERGAPGPPGSPGPPG). Residues 272–281 (PGMPGPPGQP) show a composition bias toward pro residues. Low complexity predominate over residues 283–294 (PRGSMGPMGPSP). A compositionally biased stretch (pro residues) spans 325–334 (PGPPGSPGPP). O-linked (Xyl...) (chondroitin sulfate) serine glycosylation occurs at Ser-387. Basic and acidic residues predominate over residues 390 to 402 (DYSRRTEARDPEA).

The protein belongs to the CCBE1 family.

It localises to the secreted. Required for lymphangioblast budding and angiogenic sprouting from venous endothelium during embryogenesis. This chain is Collagen and calcium-binding EGF domain-containing protein 1 (Ccbe1), found in Mus musculus (Mouse).